A 92-amino-acid chain; its full sequence is Small ribosomal subunit protein uS19 (92 aa).

The protein belongs to the universal ribosomal protein uS19 family.

Protein S19 forms a complex with S13 that binds strongly to the 16S ribosomal RNA. This is Small ribosomal subunit protein uS19 from Novosphingobium aromaticivorans (strain ATCC 700278 / DSM 12444 / CCUG 56034 / CIP 105152 / NBRC 16084 / F199).